The chain runs to 1564 residues: MSNKEVKAILKNARDAIRNKDYKEVLKQCKAVLKLEKNNYNAWVFIGLAASELEQPDQAQAAYRKAVEIEPDQLLAWQGLGNLYEKVNQKDFKEDLPNVYQKLLELYRSSDKQKWYEICKKLSDLYQQEKNYVPAAHTWHQLIKMKEDESIKSNELYPLWKRMTELLSEDVEKLDNETQELLLNAFESAIPCIEEIPSEEHQMLYQHYITCLSKLPLEEAKLKKVCENMITVYPSLIYPLKVLALHYIKSGDITEEAICCYSKLLELDPLNGPGLIGMGIKALHDRNYVLASENLSKGLKDVNCCPSAWCCLAQAQLKIHKYAEALVSCDQAINGATQDNSAPQSVVQKDAAFRLKAEALVEGNSSNNAEEALKALEQISNADNNPEICAIKGQAYLKKGCIDVASKISEELRLSHEHLAEGHFLEGLLQYIQKNYSAAEISLQYALERKPENAVYHYYLGLNYWFMSKETRRDKTKAVTQFLKAAKMDPFMSRAFYYLGHYYSEVAGDKSRARGCYKKAFELDDSDGEAGAAAVDLSMELGDMDVALAILTSVTERADAGTAKWAWLRRGLFYLRVGQHSKSVSDLHAALRADPKDSNCWECLGEAYLSRGGYTTALKSFMKASELNPDSIYSVYKIASIKQILGTYKEAVNEYQQILMKSGEYVPALKGLGECHLMLAKSALSDFLDLKAVDAIEKAIEFLARAIRLRPDLLCLWKLLGDACTCIYAVTHSSVKVNVLGILLGNDEEQQLLNKPEVLALGGRCYGRALRIQSTANLWCDLGINYYYQSQHLMGYDSLTNDASELLEKSQQCIKKAVMVESGNHQFWNALGVVSCSKGMGNNALAQHAFIKSIHCEQNNVAAWTNLGALYLMNGNIELSHQAFKVAQSLDPLYVRCWIGQALIAETVGSHETMDLFRHTTELSMHVEGAKGYAHWVCTTLQDKNNRNTALYRYNIVQMNAITAAHLALSKYTERIQNDRTAFEMLGYLNEHLNLKKQASESYRRVVSILQEREDKESSNSALQHYGRSLCAVGQYQEAIQTFSSTPLTEFDDLTGIALAFFKKGLLQESMKAYKQALSVAKSDQEKAHILTALAIIEYNRGEFDTAKTLLFKCSVLKEPSIESLQSLCALGLAKRDVTLATAALNELLKHVKIKDNIYERCLITSAIYVLQGRNEAAQRQACRDIHSHPGNPELWAFLSRLVPQHVPRDAKGGAVAGTVAYTLNINHSKKALLYAAVNELSAGALLADDRKKNALNTLQRAAHFFPDNPAVWASLMAACEAENTASYLNKKSNKKTDLSLTFLASVKSKTEGMKAVPASYTQTLRSWSLCQAICALKDQGRISEAEALCTKSIQNCPDQTPFFLLLRQIQCKQLQSQAQISEPVLEELKKTVLSNFTSHNAWHWLAEVYQSLGMMMDAEMCYRKSLQLASQQGNWNGKLSSLLRLALLALKVCMAKIPDSRWPGLLQEATSEVLKMTFCPLAVLLQGILQFSTKGSRKTRQLLEKVVYQSGCSDTIAFVARWYLLRHLHGKNDDQLVEVLLDNAKAHGDTRIIDLHKQLTESS.

TPR repeat units follow at residues 6–39 (VKAI…EKNN), 40–73 (YNAW…EPDQ), 75–110 (LAWQ…YRSS), 116–149 (YEIC…KEDE), 237–271 (IYPL…DPLN), 306–339 (PSAW…ATQD), 420–453 (AEGH…KPEN), 456–492 (YHYY…DPFM), 493–527 (SRAF…DDSD), 564–597 (KWAW…DPKD), 598–631 (SNCW…NPDS), 633–665 (YSVY…SGEY), 678–713 (MLAK…RPDL), 743–776 (LLGN…QSTA), 861–894 (VAAW…DPLY), 980–1013 (RTAF…LQER), 1020–1050 (NSAL…PLTE), 1051–1084 (FDDL…AKSD), and 1400–1433 (HNAW…ASQQ).

The polypeptide is Tetratricopeptide repeat protein 37 (ttc37) (Xenopus laevis (African clawed frog)).